The primary structure comprises 3681 residues: E3 ubiquitin-protein ligase UPL1 (3681 aa).

Positions 882–891 (DEKKSVDRGS) are enriched in basic and acidic residues. A disordered region spans residues 882–912 (DEKKSVDRGSDNSVSASSSTAERESDEDSSN). Over residues 892–901 (DNSVSASSST) the composition is skewed to low complexity. One can recognise a UBA domain in the interval 1269–1310 (QLDESIVGMIVEMGFSRSRAEIALRRVGTNSVEMAMDWLFTN). Residues 1316-1335 (QEDDELAQALALSLGNSSET) enclose the UIM domain. 10 disordered regions span residues 1332 to 1358 (SSET…KEPP), 1768 to 1802 (MEVD…KAEI), 2015 to 2094 (EQLK…MRIE), 2125 to 2151 (ENRA…EDAD), 2253 to 2287 (RQTG…TASV), 2401 to 2435 (NTTE…QSEE), 2483 to 2505 (PLPL…DGAP), 2537 to 2606 (IAPP…APEV), 2975 to 3003 (SPSS…DAES), and 3228 to 3254 (TAGE…KTDG). 3 stretches are compositionally biased toward basic and acidic residues: residues 1336–1345 (PKLEDTEKPV), 1782–1802 (KVGE…KAEI), and 2017–2037 (LKSE…HDSH). A compositionally biased stretch (polar residues) spans 2038–2087 (GNSTETEADELNQNNSSLQQVTDAAGNGQEQAQVSSQSAGERGSSQTQAM). Residues 2130–2151 (DDVDDDMGDEGEDDEGDDEDAD) are compositionally biased toward acidic residues. The span at 2253-2265 (RQTGRSSLDRSGS) shows a compositional bias: basic and acidic residues. Residues 2277 to 2287 (RPSQTGNTASV) are compositionally biased toward polar residues. Ser2598 bears the Phosphoserine mark. The span at 2982-3002 (EKLENKPVGEEASSETRKDAE) shows a compositional bias: basic and acidic residues. Residues 3237–3247 (AHGSSSKTSVD) are compositionally biased toward polar residues. Positions 3340-3681 (SPQDLKGRLN…HEASEGFGFA (342 aa)) constitute an HECT domain. The active-site Glycyl thioester intermediate is the Cys3648.

The protein belongs to the UPL family. TOM1/PTR1 subfamily. In terms of tissue distribution, widely expressed. Expressed in root, stem, cauline and rosette leaf, seedling and flower (at protein level).

It carries out the reaction S-ubiquitinyl-[E2 ubiquitin-conjugating enzyme]-L-cysteine + [acceptor protein]-L-lysine = [E2 ubiquitin-conjugating enzyme]-L-cysteine + N(6)-ubiquitinyl-[acceptor protein]-L-lysine.. The protein operates within protein modification; protein ubiquitination. Its function is as follows. Probable E3 ubiquitin-protein ligase which mediates ubiquitination and subsequent proteasomal degradation of target proteins. In Arabidopsis thaliana (Mouse-ear cress), this protein is E3 ubiquitin-protein ligase UPL1 (UPL1).